We begin with the raw amino-acid sequence, 48 residues long: uncharacterized protein (48 aa).

The N-terminal stretch at 1–21 is a signal peptide; it reads MLENNVFRLMILMGGVIALIA.

This is an uncharacterized protein from Bacillus anthracis.